The primary structure comprises 193 residues: dCTP deaminase (193 aa).

DCTP is bound by residues Arg110–Arg115, Asp128, Val136–Glu138, Tyr171, Lys178, and Gln182. The active-site Proton donor/acceptor is the Glu138. The segment at Arg169–Asp193 is disordered.

Belongs to the dCTP deaminase family. In terms of assembly, homotrimer.

The catalysed reaction is dCTP + H2O + H(+) = dUTP + NH4(+). It participates in pyrimidine metabolism; dUMP biosynthesis; dUMP from dCTP (dUTP route): step 1/2. Catalyzes the deamination of dCTP to dUTP. This Escherichia coli O8 (strain IAI1) protein is dCTP deaminase.